The sequence spans 709 residues: Transcriptional factor SWI5 (709 aa).

Ser-225 is subject to Phosphoserine. Polar residues predominate over residues 245-264 (LSPMISPPMSNTSFTGSPSR). Positions 245–267 (LSPMISPPMSNTSFTGSPSRRNN) are disordered. Residues Ser-278 and Ser-300 each carry the phosphoserine modification. Thr-339 carries the post-translational modification Phosphothreonine. Ser-376 bears the Phosphoserine mark. A disordered region spans residues 443-483 (LKPPSQQARHREGVFNDLDPNVLTKNTDNEGDDNEENEPES). A compositionally biased stretch (acidic residues) spans 471-480 (NEGDDNEENE). 3 positions are modified to phosphoserine: Ser-488, Ser-492, and Ser-505. Ser-522 carries the phosphoserine; by CDC28 modification. 3 C2H2-type zinc fingers span residues 550–574 (FECL…IQTH), 580–604 (YSCD…KKSH), and 609–632 (YACP…RMIC). The short motif at 635–659 (GKKYENVVIKRSPRKRGRPRKDGTS) is the Nuclear localization signal element. Residues 644-677 (KRSPRKRGRPRKDGTSSVSSSPIKENINKDHNGQ) are disordered. Ser-646 bears the Phosphoserine; by CDC28 mark. Positions 647–659 (PRKRGRPRKDGTS) form a DNA-binding region, a.T hook. Ser-664 bears the Phosphoserine; by CDC28 mark.

In terms of processing, cell cycle-dependent phosphorylation of three serine residues prevents SWI5 from entering the nucleus, and it accumulates in the cytoplasm. As a consequence of CDC28 kinase inactivation at the end of anaphase, the three serine residues are dephosphorylated and SWI5 enters the nucleus to activate transcription. It is then rapidly degraded. Threonine phosphorylation also seems to occur. Post-translationally, phosphorylated by PHO85.

It is found in the nucleus. Its subcellular location is the cytoplasm. In terms of biological role, determines the mother-cell-specific transcription of the HO endonuclease gene that is responsible for the initiation of mating-type switching in yeast. Recognizes a specific sequence in the promoter of the HO gene. Activates EGT2 transcription in a concentration-dependent manner. Synthesized during G2 and early mitosis. In Saccharomyces cerevisiae (strain ATCC 204508 / S288c) (Baker's yeast), this protein is Transcriptional factor SWI5 (SWI5).